Consider the following 398-residue polypeptide: Succinyl-diaminopimelate desuccinylase (398 aa).

Residue histidine 73 coordinates Zn(2+). The active site involves aspartate 75. Aspartate 106 lines the Zn(2+) pocket. Glutamate 140 functions as the Proton acceptor in the catalytic mechanism. Zn(2+)-binding residues include glutamate 141, glutamate 169, and histidine 366.

The protein belongs to the peptidase M20A family. DapE subfamily. Homodimer. The cofactor is Zn(2+). Co(2+) is required as a cofactor.

It carries out the reaction N-succinyl-(2S,6S)-2,6-diaminopimelate + H2O = (2S,6S)-2,6-diaminopimelate + succinate. The protein operates within amino-acid biosynthesis; L-lysine biosynthesis via DAP pathway; LL-2,6-diaminopimelate from (S)-tetrahydrodipicolinate (succinylase route): step 3/3. In terms of biological role, catalyzes the hydrolysis of N-succinyl-L,L-diaminopimelic acid (SDAP), forming succinate and LL-2,6-diaminopimelate (DAP), an intermediate involved in the bacterial biosynthesis of lysine and meso-diaminopimelic acid, an essential component of bacterial cell walls. The polypeptide is Succinyl-diaminopimelate desuccinylase (Agrobacterium fabrum (strain C58 / ATCC 33970) (Agrobacterium tumefaciens (strain C58))).